We begin with the raw amino-acid sequence, 382 residues long: Matrix protein (382 aa).

This sequence belongs to the morbillivirus/respirovirus/rubulavirus M protein family.

The protein resides in the virion. In terms of biological role, the M protein has a crucial role in virus assembly and interacts with the RNP complex as well as with the viral membrane. The sequence is that of Matrix protein (M) from Simiiformes (SV41).